Consider the following 184-residue polypeptide: Thymidine kinase (184 aa).

Residues 10-17 (GPMYSGKT) and 83-86 (DEVQ) each bind ATP. Glutamate 84 serves as the catalytic Proton acceptor. Zn(2+) is bound by residues cysteine 140, cysteine 143, cysteine 173, and cysteine 176.

The protein belongs to the thymidine kinase family. As to quaternary structure, homotetramer.

It is found in the cytoplasm. It carries out the reaction thymidine + ATP = dTMP + ADP + H(+). The protein is Thymidine kinase of Thermotoga petrophila (strain ATCC BAA-488 / DSM 13995 / JCM 10881 / RKU-1).